The following is a 70-amino-acid chain: ATP synthase subunit c (70 aa).

The next 2 membrane-spanning stretches (helical) occupy residues 5–25 and 47–67; these read AAGIAAGLAAVGGAIAVAIIV and FIGVPLAEAVPIIAIVVSFIL.

This sequence belongs to the ATPase C chain family. In terms of assembly, F-type ATPases have 2 components, F(1) - the catalytic core - and F(0) - the membrane proton channel. F(1) has five subunits: alpha(3), beta(3), gamma(1), delta(1), epsilon(1). F(0) has three main subunits: a(1), b(2) and c(10-14). The alpha and beta chains form an alternating ring which encloses part of the gamma chain. F(1) is attached to F(0) by a central stalk formed by the gamma and epsilon chains, while a peripheral stalk is formed by the delta and b chains.

The protein resides in the cell membrane. In terms of biological role, f(1)F(0) ATP synthase produces ATP from ADP in the presence of a proton or sodium gradient. F-type ATPases consist of two structural domains, F(1) containing the extramembraneous catalytic core and F(0) containing the membrane proton channel, linked together by a central stalk and a peripheral stalk. During catalysis, ATP synthesis in the catalytic domain of F(1) is coupled via a rotary mechanism of the central stalk subunits to proton translocation. Key component of the F(0) channel; it plays a direct role in translocation across the membrane. A homomeric c-ring of between 10-14 subunits forms the central stalk rotor element with the F(1) delta and epsilon subunits. The polypeptide is ATP synthase subunit c (Halalkalibacterium halodurans (strain ATCC BAA-125 / DSM 18197 / FERM 7344 / JCM 9153 / C-125) (Bacillus halodurans)).